Consider the following 136-residue polypeptide: uncharacterized protein (136 aa).

This is an uncharacterized protein from Leptolyngbya boryana (Plectonema boryanum).